The sequence spans 264 residues: Sirohydrochlorin cobaltochelatase (264 aa).

6 residues coordinate Co-sirohydrochlorin: glycine 45, isoleucine 84, isoleucine 85, aspartate 88, glutamate 89, and lysine 92. Histidine 145 acts as the Proton acceptor in catalysis. Co(2+) contacts are provided by histidine 145 and glutamate 175. Co-sirohydrochlorin contacts are provided by leucine 202, valine 203, and histidine 207. Histidine 207 is a binding site for Co(2+).

Belongs to the CbiK family. As to quaternary structure, homotrimer.

The catalysed reaction is Co-sirohydrochlorin + 2 H(+) = sirohydrochlorin + Co(2+). It catalyses the reaction Co-precorrin-2 + 3 H(+) = precorrin-2 + Co(2+). The protein operates within cofactor biosynthesis; adenosylcobalamin biosynthesis; cob(II)yrinate a,c-diamide from sirohydrochlorin (anaerobic route): step 1/10. Cobalt chelatase responsible for the insertion of cobalt during anaerobic cobalamin biosynthesis. Can catalyze the insertion of Co(2+) into either sirohydrochlorin or precorrin-2. It is not clear which is the natural substrate in Salmonella. The protein is Sirohydrochlorin cobaltochelatase of Salmonella typhimurium (strain LT2 / SGSC1412 / ATCC 700720).